The sequence spans 71 residues: uncharacterized protein (71 aa).

A disordered region spans residues 52–71; sequence KEKFERKEDEKSKPKGVRED.

This is an uncharacterized protein from Archaeoglobus fulgidus (strain ATCC 49558 / DSM 4304 / JCM 9628 / NBRC 100126 / VC-16).